The sequence spans 240 residues: MNAEKSPVTPNVDHEEIAKFEAVASRWWDLEGEFKPLHRINPLRLGYIAERAGGLFGKKVLDVGCGGGILAESMAREGATVTGLDMGFEPLQVAKLHALESGIQVNYVQETVEEHAAKHAGQYDVVTCMEMLEHVPDPQSVVRACAQLVKPGGDVFFSTLNRNGKSWLMAVVGAEYILRMVPKGTHDVKKFIKPAELLGWVDQTSLKERHMTGLHYNPITNTFKLGPGVDVNYMLHTQNK.

Residues arginine 44, glycine 64, aspartate 85, and methionine 129 each contribute to the S-adenosyl-L-methionine site.

Belongs to the methyltransferase superfamily. UbiG/COQ3 family.

The catalysed reaction is a 3-demethylubiquinol + S-adenosyl-L-methionine = a ubiquinol + S-adenosyl-L-homocysteine + H(+). The enzyme catalyses a 3-(all-trans-polyprenyl)benzene-1,2-diol + S-adenosyl-L-methionine = a 2-methoxy-6-(all-trans-polyprenyl)phenol + S-adenosyl-L-homocysteine + H(+). It participates in cofactor biosynthesis; ubiquinone biosynthesis. Functionally, O-methyltransferase that catalyzes the 2 O-methylation steps in the ubiquinone biosynthetic pathway. The protein is Ubiquinone biosynthesis O-methyltransferase of Escherichia fergusonii (strain ATCC 35469 / DSM 13698 / CCUG 18766 / IAM 14443 / JCM 21226 / LMG 7866 / NBRC 102419 / NCTC 12128 / CDC 0568-73).